Here is a 246-residue protein sequence, read N- to C-terminus: 23S rRNA (guanosine-2'-O-)-methyltransferase RlmB (246 aa).

Glycine 197, isoleucine 217, and leucine 226 together coordinate S-adenosyl-L-methionine.

Belongs to the class IV-like SAM-binding methyltransferase superfamily. RNA methyltransferase TrmH family. RlmB subfamily.

Its subcellular location is the cytoplasm. It catalyses the reaction guanosine(2251) in 23S rRNA + S-adenosyl-L-methionine = 2'-O-methylguanosine(2251) in 23S rRNA + S-adenosyl-L-homocysteine + H(+). Specifically methylates the ribose of guanosine 2251 in 23S rRNA. The chain is 23S rRNA (guanosine-2'-O-)-methyltransferase RlmB from Haemophilus ducreyi (strain 35000HP / ATCC 700724).